Consider the following 31-residue polypeptide: MQTIPSTTETAADFDAVIXGAGFXGLYALHR.

Residue 20 to 25 (GAGFXG) coordinates FAD.

In terms of assembly, monomer. The cofactor is FAD.

It catalyses the reaction 1-hydroxylimonen-2-one + NADPH + O2 = 3-isopropenyl-6-oxoheptanoate + NADP(+) + H2O. The catalysed reaction is (1R,4S)-1-hydroxylimonen-2-one + NADPH + O2 + H(+) = (4S,7S)-7-hydroxy-4-isopropenyl-7-methyloxepan-2-one + NADP(+) + H2O. It carries out the reaction (1S,4R)-1-hydroxylimonen-2-one + NADPH + O2 + H(+) = (4R,7R)-7-hydroxy-4-isopropenyl-7-methyloxepan-2-one + NADP(+) + H2O. The enzyme catalyses (1R,4R)-dihydrocarvone + NADPH + O2 + H(+) = (4R,7R)-4-isopropenyl-7-methyloxepan-2-one + NADP(+) + H2O. It catalyses the reaction (1S,4R)-menthone + NADPH + O2 + H(+) = (4S,7R)-7-isopropyl-4-methyloxepan-2-one + NADP(+) + H2O. The catalysed reaction is (1R,4S)-menthone + NADPH + O2 + H(+) = (4R,7S)-7-isopropyl-4-methyloxepan-2-one + NADP(+) + H2O. It carries out the reaction (1S,4R)-isodihydrocarvone + NADPH + O2 + H(+) = (3S,6R)-6-isopropenyl-3-methyloxepan-2-one + NADP(+) + H2O. It functions in the pathway terpene metabolism; monoterpene degradation. Its function is as follows. Catalyzes the NADPH- and oxygen-dependent oxidation of the monocyclic monoterpene ketones 1-hydroxy-2-oxolimonene, dihydrocarvone and menthone. Is able to convert all enantiomers of these natural substrates with almost equal efficiency. Is thus involved in the conversion of the monocyclic monoterpene ketone intermediates formed in the degradation pathways of all stereoisomers of three different monocyclic monoterpenes, i.e. limonene, (dihydro)carveol and menthol, which likely make R.erythropolis able to grow on these compounds as the sole source of carbon and energy. The polypeptide is Monocyclic monoterpene ketone monooxygenase (Rhodococcus erythropolis (Arthrobacter picolinophilus)).